Consider the following 390-residue polypeptide: Glutamate 5-kinase (390 aa).

An ATP-binding site is contributed by K29. Residues S69, D156, and N168 each coordinate substrate. Position 188 to 189 (188 to 189) interacts with ATP; it reads TD. The PUA domain maps to 295-374; sequence SGSLIVDAGA…EQFDRILGNN (80 aa).

Belongs to the glutamate 5-kinase family.

It is found in the cytoplasm. The enzyme catalyses L-glutamate + ATP = L-glutamyl 5-phosphate + ADP. It participates in amino-acid biosynthesis; L-proline biosynthesis; L-glutamate 5-semialdehyde from L-glutamate: step 1/2. Its function is as follows. Catalyzes the transfer of a phosphate group to glutamate to form L-glutamate 5-phosphate. This is Glutamate 5-kinase from Psychrobacter arcticus (strain DSM 17307 / VKM B-2377 / 273-4).